A 205-amino-acid chain; its full sequence is MATIFDILNTLNNNNNNKNYFESCKRQRTNNKTNKTIIDILPPMDVTMTNDKLIIETELAGISKDDIEISINDSILTIQGEKKKNLNKQLIIEKSSSSPSLLDTKEDEASIEEFDEDDIKPKSTETTSTLSNSKENKKDENKSKSTEKKFISERSFGNFKRYLDLTKFLYQLDLNSINTQFENGLLTITINKKLHYSNTIKININ.

In terms of domain architecture, sHSP spans 35-205; sequence KTIIDILPPM…YSNTIKININ (171 aa). Positions 99–147 are disordered; sequence PSLLDTKEDEASIEEFDEDDIKPKSTETTSTLSNSKENKKDENKSKSTE. Over residues 109 to 118 the composition is skewed to acidic residues; it reads ASIEEFDEDD. A compositionally biased stretch (basic and acidic residues) spans 134-147; sequence KENKKDENKSKSTE.

This sequence belongs to the small heat shock protein (HSP20) family.

In Dictyostelium discoideum (Social amoeba), this protein is Small heat shock protein hspG12 (hspG12).